We begin with the raw amino-acid sequence, 93 residues long: Pyrimidine/purine nucleoside phosphorylase (93 aa).

The protein belongs to the nucleoside phosphorylase PpnP family.

The catalysed reaction is a purine D-ribonucleoside + phosphate = a purine nucleobase + alpha-D-ribose 1-phosphate. It catalyses the reaction adenosine + phosphate = alpha-D-ribose 1-phosphate + adenine. It carries out the reaction cytidine + phosphate = cytosine + alpha-D-ribose 1-phosphate. The enzyme catalyses guanosine + phosphate = alpha-D-ribose 1-phosphate + guanine. The catalysed reaction is inosine + phosphate = alpha-D-ribose 1-phosphate + hypoxanthine. It catalyses the reaction thymidine + phosphate = 2-deoxy-alpha-D-ribose 1-phosphate + thymine. It carries out the reaction uridine + phosphate = alpha-D-ribose 1-phosphate + uracil. The enzyme catalyses xanthosine + phosphate = alpha-D-ribose 1-phosphate + xanthine. Its function is as follows. Catalyzes the phosphorolysis of diverse nucleosides, yielding D-ribose 1-phosphate and the respective free bases. Can use uridine, adenosine, guanosine, cytidine, thymidine, inosine and xanthosine as substrates. Also catalyzes the reverse reactions. This is Pyrimidine/purine nucleoside phosphorylase from Pseudomonas aeruginosa (strain LESB58).